Consider the following 280-residue polypeptide: F-box only protein 27 (280 aa).

An F-box domain is found at 20–67 (VLDLSRLPPELLLLVLSHVPPRTLLMHCRRVCRAWRALVDGQALWLLL). Residues 101-277 (FCALRPLGRN…VTNSSVIIRV (177 aa)) form the FBA domain.

As to quaternary structure, part of a SCF (SKP1-cullin-F-box) protein ligase complex. Interacts with SKP1 and CUL1. In terms of tissue distribution, detected in brain, heart and muscle.

Functionally, substrate-recognition component of the SCF (SKP1-CUL1-F-box protein)-type E3 ubiquitin ligase complex. Able to recognize and bind complex-type oligosaccharides. This Mus musculus (Mouse) protein is F-box only protein 27 (Fbxo27).